Consider the following 137-residue polypeptide: Nucleoside diphosphate kinase (137 aa).

ATP contacts are provided by lysine 9, phenylalanine 57, arginine 85, threonine 91, arginine 102, and asparagine 112. The Pros-phosphohistidine intermediate role is filled by histidine 115.

Belongs to the NDK family. In terms of assembly, homotetramer. Mg(2+) is required as a cofactor.

The protein resides in the cytoplasm. It catalyses the reaction a 2'-deoxyribonucleoside 5'-diphosphate + ATP = a 2'-deoxyribonucleoside 5'-triphosphate + ADP. The catalysed reaction is a ribonucleoside 5'-diphosphate + ATP = a ribonucleoside 5'-triphosphate + ADP. In terms of biological role, major role in the synthesis of nucleoside triphosphates other than ATP. The ATP gamma phosphate is transferred to the NDP beta phosphate via a ping-pong mechanism, using a phosphorylated active-site intermediate. The protein is Nucleoside diphosphate kinase of Desulfotalea psychrophila (strain LSv54 / DSM 12343).